A 382-amino-acid chain; its full sequence is Chaperone protein DnaJ (382 aa).

A J domain is found at 5–70; the sequence is DYYEVLGVSR…DKKAAYDRYG (66 aa). The segment at 141–219 adopts a CR-type zinc-finger fold; the sequence is GVQKTINVPA…CHGAGRVEKE (79 aa). Cys154, Cys157, Cys171, Cys174, Cys193, Cys196, Cys207, and Cys210 together coordinate Zn(2+). CXXCXGXG motif repeat units follow at residues 154 to 161, 171 to 178, 193 to 200, and 207 to 214; these read CDACKGTG, CPTCSGMG, CPTCNGMG, and CKVCHGAG.

Belongs to the DnaJ family. As to quaternary structure, homodimer. Requires Zn(2+) as cofactor.

It localises to the cytoplasm. Its function is as follows. Participates actively in the response to hyperosmotic and heat shock by preventing the aggregation of stress-denatured proteins and by disaggregating proteins, also in an autonomous, DnaK-independent fashion. Unfolded proteins bind initially to DnaJ; upon interaction with the DnaJ-bound protein, DnaK hydrolyzes its bound ATP, resulting in the formation of a stable complex. GrpE releases ADP from DnaK; ATP binding to DnaK triggers the release of the substrate protein, thus completing the reaction cycle. Several rounds of ATP-dependent interactions between DnaJ, DnaK and GrpE are required for fully efficient folding. Also involved, together with DnaK and GrpE, in the DNA replication of plasmids through activation of initiation proteins. The polypeptide is Chaperone protein DnaJ (Cereibacter sphaeroides (strain ATCC 17029 / ATH 2.4.9) (Rhodobacter sphaeroides)).